A 104-amino-acid chain; its full sequence is NADH-quinone oxidoreductase subunit K (104 aa).

The next 3 helical transmembrane spans lie at V4–A24, V31–F51, and L67–L87.

It belongs to the complex I subunit 4L family. As to quaternary structure, NDH-1 is composed of 14 different subunits. Subunits NuoA, H, J, K, L, M, N constitute the membrane sector of the complex.

The protein localises to the cell membrane. It carries out the reaction a quinone + NADH + 5 H(+)(in) = a quinol + NAD(+) + 4 H(+)(out). Functionally, NDH-1 shuttles electrons from NADH, via FMN and iron-sulfur (Fe-S) centers, to quinones in the respiratory chain. The immediate electron acceptor for the enzyme in this species is believed to be a menaquinone. Couples the redox reaction to proton translocation (for every two electrons transferred, four hydrogen ions are translocated across the cytoplasmic membrane), and thus conserves the redox energy in a proton gradient. This Bacillus cereus (strain Q1) protein is NADH-quinone oxidoreductase subunit K.